A 132-amino-acid polypeptide reads, in one-letter code: MAVTHSVGDMLTKIRNASRVKHESVDLKMSKINKSILDILKEEGYIKNYNIFDKKGISFIKAILNYDNKRNPAINRIDAISTPGRKVYSSYKNMPRIKNGYGILIVSSSKGVITGKQAKDNKVGGELICSVW.

It belongs to the universal ribosomal protein uS8 family. Part of the 30S ribosomal subunit. Contacts proteins S5 and S12.

In terms of biological role, one of the primary rRNA binding proteins, it binds directly to 16S rRNA central domain where it helps coordinate assembly of the platform of the 30S subunit. The sequence is that of Small ribosomal subunit protein uS8 from Borrelia turicatae (strain 91E135).